Here is a 126-residue protein sequence, read N- to C-terminus: S-adenosylmethionine decarboxylase proenzyme (126 aa).

Serine 63 serves as the catalytic Schiff-base intermediate with substrate; via pyruvic acid. Pyruvic acid (Ser); by autocatalysis is present on serine 63. Histidine 68 functions as the Proton acceptor; for processing activity in the catalytic mechanism. Residue cysteine 83 is the Proton donor; for catalytic activity of the active site.

It belongs to the prokaryotic AdoMetDC family. Type 1 subfamily. Heterotetramer of two alpha and two beta chains arranged as a dimer of alpha/beta heterodimers. It depends on pyruvate as a cofactor. Post-translationally, is synthesized initially as an inactive proenzyme. Formation of the active enzyme involves a self-maturation process in which the active site pyruvoyl group is generated from an internal serine residue via an autocatalytic post-translational modification. Two non-identical subunits are generated from the proenzyme in this reaction, and the pyruvate is formed at the N-terminus of the alpha chain, which is derived from the carboxyl end of the proenzyme. The post-translation cleavage follows an unusual pathway, termed non-hydrolytic serinolysis, in which the side chain hydroxyl group of the serine supplies its oxygen atom to form the C-terminus of the beta chain, while the remainder of the serine residue undergoes an oxidative deamination to produce ammonia and the pyruvoyl group blocking the N-terminus of the alpha chain.

The enzyme catalyses S-adenosyl-L-methionine + H(+) = S-adenosyl 3-(methylsulfanyl)propylamine + CO2. The protein operates within amine and polyamine biosynthesis; S-adenosylmethioninamine biosynthesis; S-adenosylmethioninamine from S-adenosyl-L-methionine: step 1/1. Functionally, catalyzes the decarboxylation of S-adenosylmethionine to S-adenosylmethioninamine (dcAdoMet), the propylamine donor required for the synthesis of the polyamines spermine and spermidine from the diamine putrescine. The sequence is that of S-adenosylmethionine decarboxylase proenzyme from Clostridium kluyveri (strain NBRC 12016).